The primary structure comprises 151 residues: Large ribosomal subunit protein uL30 (151 aa).

This sequence belongs to the universal ribosomal protein uL30 family. In terms of assembly, part of the 50S ribosomal subunit.

The sequence is that of Large ribosomal subunit protein uL30 from Methanothrix thermoacetophila (strain DSM 6194 / JCM 14653 / NBRC 101360 / PT) (Methanosaeta thermophila).